We begin with the raw amino-acid sequence, 184 residues long: Putative rRNA methyltransferase YlbH (184 aa).

The segment at 1–22 (MRVISGSKKGRSLKAVAGTSTR) is disordered.

It belongs to the methyltransferase superfamily. RsmD family.

Functionally, may catalyze the S-adenosyl-L-methionine-dependent methylation of a specific base in rRNA. The protein is Putative rRNA methyltransferase YlbH (ylbH) of Bacillus subtilis (strain 168).